Reading from the N-terminus, the 86-residue chain is Large ribosomal subunit protein uL23 (86 aa).

It belongs to the universal ribosomal protein uL23 family. Part of the 50S ribosomal subunit. Contacts protein L29.

Binds to 23S rRNA. One of the proteins that surrounds the polypeptide exit tunnel on the outside of the ribosome. The sequence is that of Large ribosomal subunit protein uL23 from Thermococcus gammatolerans (strain DSM 15229 / JCM 11827 / EJ3).